Reading from the N-terminus, the 1333-residue chain is Protein CLASP-1 (1333 aa).

Residues 168–206 (LIPQLCRLTNDPNSEVRDASTNCLVDLMVFGGKSIIAKI) form an HEAT 1 repeat. Residues 269–305 (STTSFTSSARLSTPPRTNAPSLSPSPSTPSPLSLPAA) show a composition bias toward low complexity. The tract at residues 269–311 (STTSFTSSARLSTPPRTNAPSLSPSPSTPSPLSLPAANGRSRD) is disordered. Residues 360–389 (SNSDVREKLETANSVLRNANEDWSKRANQL) adopt a coiled-coil conformation. Disordered stretches follow at residues 579-711 (QKML…HQTP) and 764-792 (TPPK…NSSN). Low complexity predominate over residues 601–611 (NQKQPQQPQQN). Polar residues predominate over residues 612-644 (ISQKFLSQRSASALDNKSQVLSIAKPQQSNPSR). Low complexity-rich tracts occupy residues 657 to 669 (SSTS…VRSS) and 686 to 707 (TNFN…STST). Residues 1266–1304 (VAPCFVSAYDSTSSSVRKCAVFGLVALVQRVGMPRLETH) form an HEAT 2 repeat.

It belongs to the CLASP family.

It localises to the cytoplasm. Its subcellular location is the cytoskeleton. In terms of biological role, microtubule plus-end tracking protein that promotes the stabilization of dynamic microtubules. This Caenorhabditis briggsae protein is Protein CLASP-1.